A 347-amino-acid chain; its full sequence is DNA-directed RNA polymerase subunit alpha (347 aa).

Positions 1–230 are alpha N-terminal domain (alpha-NTD); it reads MFKGFQKPKR…DHMTIFINFE (230 aa). Positions 247-347 are alpha C-terminal domain (alpha-CTD); it reads MNEVLNRSVE…EDDGQDQIGE (101 aa). Positions 320–347 are disordered; the sequence is GRLVAPPPSAGGGPDFGPEDDGQDQIGE. Positions 336-347 are enriched in acidic residues; it reads GPEDDGQDQIGE.

This sequence belongs to the RNA polymerase alpha chain family. As to quaternary structure, homodimer. The RNAP catalytic core consists of 2 alpha, 1 beta, 1 beta' and 1 omega subunit. When a sigma factor is associated with the core the holoenzyme is formed, which can initiate transcription.

The enzyme catalyses RNA(n) + a ribonucleoside 5'-triphosphate = RNA(n+1) + diphosphate. In terms of biological role, DNA-dependent RNA polymerase catalyzes the transcription of DNA into RNA using the four ribonucleoside triphosphates as substrates. The polypeptide is DNA-directed RNA polymerase subunit alpha (Solibacter usitatus (strain Ellin6076)).